The sequence spans 411 residues: Serine/threonine transporter SstT (411 aa).

The next 8 membrane-spanning stretches (helical) occupy residues Ile17–Ala37, Leu41–Val61, Ile79–Phe99, Ala138–Leu158, Leu189–Gly209, Leu214–Phe234, Met295–Ile315, and Val327–Ile347.

Belongs to the dicarboxylate/amino acid:cation symporter (DAACS) (TC 2.A.23) family.

It is found in the cell inner membrane. The enzyme catalyses L-serine(in) + Na(+)(in) = L-serine(out) + Na(+)(out). It catalyses the reaction L-threonine(in) + Na(+)(in) = L-threonine(out) + Na(+)(out). In terms of biological role, involved in the import of serine and threonine into the cell, with the concomitant import of sodium (symport system). This is Serine/threonine transporter SstT from Serratia proteamaculans (strain 568).